A 299-amino-acid polypeptide reads, in one-letter code: Oxygen-dependent coproporphyrinogen-III oxidase (299 aa).

S92 serves as a coordination point for substrate. Positions 96 and 106 each coordinate a divalent metal cation. Catalysis depends on H106, which acts as the Proton donor. Residue 108–110 coordinates substrate; sequence NVR. A divalent metal cation is bound by residues H145 and H175. Positions 240–275 are important for dimerization; sequence YVEFNLVWDRGTLFGLQTGGRTESILMSMPPLVRWE. 258–260 contributes to the substrate binding site; it reads GGR.

The protein belongs to the aerobic coproporphyrinogen-III oxidase family. Homodimer. It depends on a divalent metal cation as a cofactor.

The protein localises to the cytoplasm. It catalyses the reaction coproporphyrinogen III + O2 + 2 H(+) = protoporphyrinogen IX + 2 CO2 + 2 H2O. It participates in porphyrin-containing compound metabolism; protoporphyrin-IX biosynthesis; protoporphyrinogen-IX from coproporphyrinogen-III (O2 route): step 1/1. In terms of biological role, involved in the heme biosynthesis. Catalyzes the aerobic oxidative decarboxylation of propionate groups of rings A and B of coproporphyrinogen-III to yield the vinyl groups in protoporphyrinogen-IX. The chain is Oxygen-dependent coproporphyrinogen-III oxidase from Shigella boydii serotype 18 (strain CDC 3083-94 / BS512).